Here is a 165-residue protein sequence, read N- to C-terminus: Plastocyanin, chloroplastic (165 aa).

The transit peptide at 1-66 (MATVTSSAAV…AGILAGNAMA (66 aa)) directs the protein to the chloroplast. A Plastocyanin-like domain is found at 67–165 (AEVLLGSSDG…AGMVGKVTVN (99 aa)). Residues H103, C150, H153, and M158 each contribute to the Cu cation site.

It belongs to the plastocyanin family. The cofactor is Cu(2+).

Its subcellular location is the plastid. The protein resides in the chloroplast thylakoid membrane. Participates in electron transfer between P700 and the cytochrome b6-f complex in photosystem I. The polypeptide is Plastocyanin, chloroplastic (PETE) (Silene latifolia subsp. alba (White campion)).